The primary structure comprises 253 residues: Blue-light photoreceptor (253 aa).

In terms of domain architecture, PAS spans 6-79; it reads QFDVILKALN…AKIRHAINEK (74 aa). Cys56 carries the post-translational modification S-4a-FMN cysteine. The 54-residue stretch at 80-133 folds into the PAC domain; sequence STANVLLKNYRKDGTSFMNELTIEPIYDDHEHLYFVGIQKDVTTEHDYQLELEK. Residues 142–253 enclose the STAS domain; the sequence is STPIVPIKEN…STIKEALQFY (112 aa).

Post-translationally, FMN binds covalently to cysteine after exposure to blue light and this bond is spontaneously broken in the dark.

In terms of biological role, exhibits the same spectroscopical features and blue-light induced photochemistry as plants phototropins, with the reversible formation of a blue-shifted photoproduct, assigned to an FMN-cysteine thiol adduct. Positive regulator in the activation of the general stress transcription factor sigma-B. In Listeria monocytogenes serovar 1/2a (strain ATCC BAA-679 / EGD-e), this protein is Blue-light photoreceptor.